The sequence spans 790 residues: Phenylalanine--tRNA ligase beta subunit (790 aa).

The region spanning 39–154 is the tRNA-binding domain; that stretch reads PDSLNTVVTG…ADTPLGESAC (116 aa). Residues 404–483 enclose the B5 domain; that stretch reads FSPLSLSVRP…FVQKTQKILP (80 aa). Residues D457, D463, E466, and E467 each coordinate Mg(2+). The 97-residue stretch at 694–790 folds into the FDX-ACB domain; it reads PIYPASSRDI…KLANIGQGNS (97 aa).

It belongs to the phenylalanyl-tRNA synthetase beta subunit family. Type 1 subfamily. In terms of assembly, tetramer of two alpha and two beta subunits. It depends on Mg(2+) as a cofactor.

The protein localises to the cytoplasm. It carries out the reaction tRNA(Phe) + L-phenylalanine + ATP = L-phenylalanyl-tRNA(Phe) + AMP + diphosphate + H(+). In Chlamydia trachomatis serovar A (strain ATCC VR-571B / DSM 19440 / HAR-13), this protein is Phenylalanine--tRNA ligase beta subunit.